We begin with the raw amino-acid sequence, 345 residues long: MAEANERSKEMARSNSCVFPRDLLQRFISNSVEGEDDDEEEDDDEIELNLGLSLGGRFGVDKSNKLVRSSSVVVTMPLFREDHHHHQAAAMITTKVSTETVAGATRGTGLMRTTSLPAESEEEWRKRKEMQTLRRMAAKRRRSEKLRTGVGGGNSNNPEEAATATASRRRGRPSSGLPRWSATANKSGLLRQHSAGLDSLQVSGESLGGGRAAGSSSSVSELETKASSDEARSLPSTTQPQQETTTKPTNRLRRLSSVDMNMKMEPQGKGKSEMPCVFTKGDGPNGKRVDGILYRYGSGEEVRIMCVCHGDFLSPADFVKHAGGPHVDHPLRHIVVNTSSPSNLL.

Disordered regions lie at residues 114–185 and 201–256; these read TSLP…ATAN and QVSG…RRLS. Composition is skewed to basic and acidic residues over residues 123–132 and 222–232; these read EWRKRKEMQT and LETKASSDEAR. Residues 235–249 are compositionally biased toward low complexity; sequence PSTTQPQQETTTKPT.

This sequence belongs to the Ninja family. As to quaternary structure, forms a heterodimer with AFP2. Interacts with ABI5/DPBF1, DPBF2, AREB3/DPBF3, ABF1, ABF3/DPBF5 and ABF4/AREB2.

The protein localises to the nucleus. In terms of biological role, acts as a negative regulator of abscisic acid (ABA) response during germination through the ubiquitin-mediated proteolysis of ABI5/DPBF1. The sequence is that of Ninja-family protein AFP1 (AFP1) from Arabidopsis thaliana (Mouse-ear cress).